The chain runs to 231 residues: High-affinity zinc uptake system ATP-binding protein ZnuC (231 aa).

Residues 4–230 (VSLKDIVFGY…CLTWNSCDEL (227 aa)) form the ABC transporter domain.

It belongs to the ABC transporter superfamily. In terms of assembly, the complex is composed of two ATP-binding proteins (ZnuC), two transmembrane proteins (ZnuB) and a solute-binding protein (ZnuA).

The protein localises to the cell membrane. The catalysed reaction is Zn(2+)(out) + ATP(in) + H2O(in) = Zn(2+)(in) + ADP(in) + phosphate(in) + H(+)(in). Functionally, part of the high-affinity ABC transporter complex ZnuABC involved in zinc import. Responsible for energy coupling to the transport system. ZnuABC-mediated zinc transport is required for comF expression and competence development. In Bacillus subtilis (strain 168), this protein is High-affinity zinc uptake system ATP-binding protein ZnuC (znuC).